Consider the following 493-residue polypeptide: UDP-N-acetylmuramoyl-L-alanyl-D-glutamate--2,6-diaminopimelate ligase (493 aa).

Serine 30 contributes to the UDP-N-acetyl-alpha-D-muramoyl-L-alanyl-D-glutamate binding site. 114 to 120 (GTNGKTS) contacts ATP. UDP-N-acetyl-alpha-D-muramoyl-L-alanyl-D-glutamate is bound by residues 156–157 (TT), serine 183, glutamine 189, and arginine 191. An N6-carboxylysine modification is found at lysine 223. Residues arginine 386, 410-413 (DNPR), glycine 460, and glutamate 464 each bind meso-2,6-diaminopimelate. The Meso-diaminopimelate recognition motif signature appears at 410-413 (DNPR).

This sequence belongs to the MurCDEF family. MurE subfamily. Mg(2+) serves as cofactor. Carboxylation is probably crucial for Mg(2+) binding and, consequently, for the gamma-phosphate positioning of ATP.

It is found in the cytoplasm. The enzyme catalyses UDP-N-acetyl-alpha-D-muramoyl-L-alanyl-D-glutamate + meso-2,6-diaminopimelate + ATP = UDP-N-acetyl-alpha-D-muramoyl-L-alanyl-gamma-D-glutamyl-meso-2,6-diaminopimelate + ADP + phosphate + H(+). Its pathway is cell wall biogenesis; peptidoglycan biosynthesis. In terms of biological role, catalyzes the addition of meso-diaminopimelic acid to the nucleotide precursor UDP-N-acetylmuramoyl-L-alanyl-D-glutamate (UMAG) in the biosynthesis of bacterial cell-wall peptidoglycan. This chain is UDP-N-acetylmuramoyl-L-alanyl-D-glutamate--2,6-diaminopimelate ligase, found in Chromobacterium violaceum (strain ATCC 12472 / DSM 30191 / JCM 1249 / CCUG 213 / NBRC 12614 / NCIMB 9131 / NCTC 9757 / MK).